A 335-amino-acid chain; its full sequence is 2-keto-3-deoxygluconate permease (335 aa).

Transmembrane regions (helical) follow at residues 10 to 30 (IPGG…TAAP), 42 to 62 (GIIT…GASI), 77 to 97 (LVLT…QLLP), 100 to 120 (GIEV…AMDM), 141 to 161 (AFVL…LGSA), 163 to 183 (LASF…IGFA), 200 to 220 (QTLI…GVIL), 224 to 244 (LLGI…LIIA), 254 to 274 (TAGL…VIIA), and 289 to 309 (ALVA…TAMY).

This sequence belongs to the KdgT transporter family.

It localises to the cell inner membrane. It catalyses the reaction 2-dehydro-3-deoxy-D-gluconate(in) + H(+)(in) = 2-dehydro-3-deoxy-D-gluconate(out) + H(+)(out). Catalyzes the proton-dependent uptake of 2-keto-3-deoxygluconate (KDG) into the cell. This chain is 2-keto-3-deoxygluconate permease, found in Tolumonas auensis (strain DSM 9187 / NBRC 110442 / TA 4).